The primary structure comprises 288 residues: Centromere protein P (288 aa).

Positions 1–71 (MDAELAEVRA…HLESELSFLS (71 aa)) form a coiled coil. S38 carries the phosphoserine modification.

The protein belongs to the CENP-P/CTF19 family. As to quaternary structure, component of the CENPA-CAD complex, composed of CENPI, CENPK, CENPL, CENPO, CENPP, CENPQ, CENPR and CENPS. The CENPA-CAD complex interacts with the CENPA-NAC complex, at least composed of CENPA, CENPC, CENPH, CENPM, CENPN, CENPT and CENPU.

Its subcellular location is the nucleus. The protein resides in the chromosome. It localises to the centromere. In terms of biological role, component of the CENPA-CAD (nucleosome distal) complex, a complex recruited to centromeres which is involved in assembly of kinetochore proteins, mitotic progression and chromosome segregation. May be involved in incorporation of newly synthesized CENPA into centromeres via its interaction with the CENPA-NAC complex. The protein is Centromere protein P (CENPP) of Homo sapiens (Human).